Reading from the N-terminus, the 459-residue chain is Bifunctional protein GlmU (459 aa).

The interval methionine 1–arginine 229 is pyrophosphorylase. Residues leucine 8 to glycine 11, lysine 22, glutamine 72, and glycine 77 to threonine 78 each bind UDP-N-acetyl-alpha-D-glucosamine. Aspartate 102 serves as a coordination point for Mg(2+). UDP-N-acetyl-alpha-D-glucosamine is bound by residues glycine 139, glutamate 154, asparagine 169, and asparagine 227. Residue asparagine 227 coordinates Mg(2+). The tract at residues valine 230–asparagine 250 is linker. The N-acetyltransferase stretch occupies residues glycine 251–lysine 459. UDP-N-acetyl-alpha-D-glucosamine is bound by residues arginine 332 and lysine 350. Histidine 362 serves as the catalytic Proton acceptor. UDP-N-acetyl-alpha-D-glucosamine contacts are provided by tyrosine 365 and asparagine 376. Residues alanine 379, asparagine 385–tyrosine 386, serine 404, alanine 422, and arginine 439 each bind acetyl-CoA.

The protein in the N-terminal section; belongs to the N-acetylglucosamine-1-phosphate uridyltransferase family. It in the C-terminal section; belongs to the transferase hexapeptide repeat family. Homotrimer. Requires Mg(2+) as cofactor.

It localises to the cytoplasm. The enzyme catalyses alpha-D-glucosamine 1-phosphate + acetyl-CoA = N-acetyl-alpha-D-glucosamine 1-phosphate + CoA + H(+). The catalysed reaction is N-acetyl-alpha-D-glucosamine 1-phosphate + UTP + H(+) = UDP-N-acetyl-alpha-D-glucosamine + diphosphate. The protein operates within nucleotide-sugar biosynthesis; UDP-N-acetyl-alpha-D-glucosamine biosynthesis; N-acetyl-alpha-D-glucosamine 1-phosphate from alpha-D-glucosamine 6-phosphate (route II): step 2/2. It participates in nucleotide-sugar biosynthesis; UDP-N-acetyl-alpha-D-glucosamine biosynthesis; UDP-N-acetyl-alpha-D-glucosamine from N-acetyl-alpha-D-glucosamine 1-phosphate: step 1/1. It functions in the pathway bacterial outer membrane biogenesis; LPS lipid A biosynthesis. Its function is as follows. Catalyzes the last two sequential reactions in the de novo biosynthetic pathway for UDP-N-acetylglucosamine (UDP-GlcNAc). The C-terminal domain catalyzes the transfer of acetyl group from acetyl coenzyme A to glucosamine-1-phosphate (GlcN-1-P) to produce N-acetylglucosamine-1-phosphate (GlcNAc-1-P), which is converted into UDP-GlcNAc by the transfer of uridine 5-monophosphate (from uridine 5-triphosphate), a reaction catalyzed by the N-terminal domain. This chain is Bifunctional protein GlmU, found in Streptococcus agalactiae serotype V (strain ATCC BAA-611 / 2603 V/R).